The sequence spans 161 residues: Cyclic pyranopterin monophosphate synthase (161 aa).

Substrate-binding positions include 78 to 80 (MCH) and 116 to 117 (ME). The active site involves Asp-131.

It belongs to the MoaC family. As to quaternary structure, homohexamer; trimer of dimers.

The enzyme catalyses (8S)-3',8-cyclo-7,8-dihydroguanosine 5'-triphosphate = cyclic pyranopterin phosphate + diphosphate. Its pathway is cofactor biosynthesis; molybdopterin biosynthesis. Catalyzes the conversion of (8S)-3',8-cyclo-7,8-dihydroguanosine 5'-triphosphate to cyclic pyranopterin monophosphate (cPMP). This chain is Cyclic pyranopterin monophosphate synthase, found in Nitratidesulfovibrio vulgaris (strain ATCC 29579 / DSM 644 / CCUG 34227 / NCIMB 8303 / VKM B-1760 / Hildenborough) (Desulfovibrio vulgaris).